The chain runs to 368 residues: Decarboxylase yanB (368 aa).

Zn(2+) is bound by residues His7, His9, and His159. N-linked (GlcNAc...) asparagine glycosylation is present at Asn169. Zn(2+) is bound at residue Asp283. Residues 339–359 (WGAFSACLLLPVGLSALYSVL) traverse the membrane as a helical segment.

It belongs to the metallo-dependent hydrolases superfamily. ACMSD family.

It localises to the membrane. It carries out the reaction 6-methylsalicylate + H(+) = 3-methylphenol + CO2. Its pathway is secondary metabolite biosynthesis; terpenoid biosynthesis. Decarboxylase; part of the gene cluster that mediates the biosynthesis of yanuthone D, a fungal isoprenoid epoxycyclohexenone that acts as an antibiotic against fungi and bacteria. The first step of the pathway is the synthesis of 6-methylsalicylic acid (6-MSA) by the polyketide synthase yanA. 6-MSA is then converted to m-cresol by the decarboxylase yanB. The cytochrome P450 monooxygenase yanC then catalyzes the oxidation of m-cresol to toluquinol. Epoxidation of toluquinol is then performed by the short chain dehydrogenase yanD, with the help of yanE, and a further prenylation by yanG leads to 7-deacetoxyyanuthone A. The next step is the hydroxylation of C-22 of 7-deacetoxyyanuthone A by the cytochrome P450 monooxygenase yanH to yield 22-deacetylyanuthone A. O-Mevalon transferase yanI then attaches mevalon to the hydroxyl group of 22-deacetylyanuthone A to produce yanuthone E. Finally, the FAD-dependent monooxygenase yanF oxidizes the hydroxyl group at C15 of yanuthone E to form yanuthone D. Furthermore, several branching points in the pathway lead to the production of yanuthones F and G from 7-deacetoxyyanuthone A; yanuthones H and I from 22-deacetylyanuthone A; and yanuthone J from yanuthone E. This Aspergillus niger (strain ATCC 1015 / CBS 113.46 / FGSC A1144 / LSHB Ac4 / NCTC 3858a / NRRL 328 / USDA 3528.7) protein is Decarboxylase yanB.